We begin with the raw amino-acid sequence, 426 residues long: Glutamate-1-semialdehyde 2,1-aminomutase (426 aa).

Residue Lys265 is modified to N6-(pyridoxal phosphate)lysine.

Belongs to the class-III pyridoxal-phosphate-dependent aminotransferase family. HemL subfamily. As to quaternary structure, homodimer. Pyridoxal 5'-phosphate is required as a cofactor.

It localises to the cytoplasm. It catalyses the reaction (S)-4-amino-5-oxopentanoate = 5-aminolevulinate. Its pathway is porphyrin-containing compound metabolism; protoporphyrin-IX biosynthesis; 5-aminolevulinate from L-glutamyl-tRNA(Glu): step 2/2. The protein is Glutamate-1-semialdehyde 2,1-aminomutase of Escherichia coli O81 (strain ED1a).